A 356-amino-acid chain; its full sequence is MALLTDLLNLDLSGSTEKIIAEYIWIGGSGMDLRSKARHLPGPVTHPSKLPKWNYDGSSTGQAPGEDSEVILYPQAILKDPFREGNNILVMCDCYTPRGEPIPTNKRYNAAKILSNPDVAKEEPWYGIEQEYTLLQKDINWPLGWPVGGFPGPQGPYYCGIGADKSFGRDIVDSHYKACLFGGVNISGINGEVMPGQWEFQVGPTVGISAGDQVWVARYILERITEIAGVVVTFDPKPIPGDWNGAGAHTNYSTESMRNDGGFKVIVDAVEKLKLKHKEHIAAYGEGNERRLTGKHETADINTSSWGVANRGASVRVGRETEQNGKGYFEDRRPASNMDPYVVTSMIAQTTILWKP.

Residues 19–99 (IIAEYIWIGG…VMCDCYTPRG (81 aa)) enclose the GS beta-grasp domain. The 251-residue stretch at 106-356 (KRYNAAKILS…IAQTTILWKP (251 aa)) folds into the GS catalytic domain.

Belongs to the glutamine synthetase family. As to quaternary structure, homooctamer.

It localises to the cytoplasm. The enzyme catalyses L-glutamate + NH4(+) + ATP = L-glutamine + ADP + phosphate + H(+). The polypeptide is Glutamine synthetase (Hordeum vulgare (Barley)).